The following is a 135-amino-acid chain: uncharacterized protein (135 aa).

Residues 8–123 enclose the HotDog ACOT-type domain; it reads PQGTIVLKTL…IFIYVAIDET (116 aa).

This sequence belongs to the acyl coenzyme A hydrolase family.

This is an uncharacterized protein from Buchnera aphidicola subsp. Schizaphis graminum (strain Sg).